The sequence spans 244 residues: 5-oxoprolinase subunit A (244 aa).

The protein belongs to the LamB/PxpA family. As to quaternary structure, forms a complex composed of PxpA, PxpB and PxpC.

It catalyses the reaction 5-oxo-L-proline + ATP + 2 H2O = L-glutamate + ADP + phosphate + H(+). In terms of biological role, catalyzes the cleavage of 5-oxoproline to form L-glutamate coupled to the hydrolysis of ATP to ADP and inorganic phosphate. This is 5-oxoprolinase subunit A from Salmonella newport (strain SL254).